A 493-amino-acid chain; its full sequence is Glycerol kinase (493 aa).

T13 provides a ligand contact to ADP. T13, T14, and S15 together coordinate ATP. T13 is a sn-glycerol 3-phosphate binding site. Residue R17 participates in ADP binding. Sn-glycerol 3-phosphate-binding residues include R83, E84, Y135, and D244. R83, E84, Y135, D244, and Q245 together coordinate glycerol. Residues T266 and G309 each coordinate ADP. 4 residues coordinate ATP: T266, G309, Q313, and G410. Positions 410 and 414 each coordinate ADP.

The protein belongs to the FGGY kinase family.

It catalyses the reaction glycerol + ATP = sn-glycerol 3-phosphate + ADP + H(+). It functions in the pathway polyol metabolism; glycerol degradation via glycerol kinase pathway; sn-glycerol 3-phosphate from glycerol: step 1/1. Its activity is regulated as follows. Inhibited by fructose 1,6-bisphosphate (FBP). Functionally, key enzyme in the regulation of glycerol uptake and metabolism. Catalyzes the phosphorylation of glycerol to yield sn-glycerol 3-phosphate. The protein is Glycerol kinase of Shewanella halifaxensis (strain HAW-EB4).